Reading from the N-terminus, the 208-residue chain is Type 3 secretion system stator protein (208 aa).

It belongs to the SctL stator family. In terms of assembly, the core secretion machinery of the T3SS is composed of approximately 20 different proteins, including cytoplasmic components, a base, an export apparatus and a needle. This subunit is part of the cytosolic complex.

Its subcellular location is the cytoplasm. Functionally, component of the type III secretion system (T3SS), also called injectisome, which is used to inject bacterial effector proteins into eukaryotic host cells. Acts as a regulator of the HrcN/SctN ATPase activity. The polypeptide is Type 3 secretion system stator protein (Sinorhizobium fredii (strain NBRC 101917 / NGR234)).